A 147-amino-acid chain; its full sequence is Large ribosomal subunit protein bL9 (147 aa).

The protein belongs to the bacterial ribosomal protein bL9 family.

Functionally, binds to the 23S rRNA. This is Large ribosomal subunit protein bL9 from Sulfurovum sp. (strain NBC37-1).